Reading from the N-terminus, the 257-residue chain is 1-(5-phosphoribosyl)-5-[(5-phosphoribosylamino)methylideneamino] imidazole-4-carboxamide isomerase (257 aa).

Catalysis depends on aspartate 8, which acts as the Proton acceptor. The active-site Proton donor is aspartate 129.

The protein belongs to the HisA/HisF family.

It localises to the cytoplasm. It catalyses the reaction 1-(5-phospho-beta-D-ribosyl)-5-[(5-phospho-beta-D-ribosylamino)methylideneamino]imidazole-4-carboxamide = 5-[(5-phospho-1-deoxy-D-ribulos-1-ylimino)methylamino]-1-(5-phospho-beta-D-ribosyl)imidazole-4-carboxamide. It functions in the pathway amino-acid biosynthesis; L-histidine biosynthesis; L-histidine from 5-phospho-alpha-D-ribose 1-diphosphate: step 4/9. In Trichodesmium erythraeum (strain IMS101), this protein is 1-(5-phosphoribosyl)-5-[(5-phosphoribosylamino)methylideneamino] imidazole-4-carboxamide isomerase.